Consider the following 434-residue polypeptide: 23S rRNA (uracil(1939)-C(5))-methyltransferase RlmD (434 aa).

The TRAM domain occupies 10-68 (RVTTRQIITVTVNDLDPFGQGVARHQGKALFVSGVLPQEQAEVVLVEDKKQYARAQVKR). [4Fe-4S] cluster contacts are provided by Cys81, Cys87, Cys90, and Cys162. Residues Gln265, Phe294, Asn299, Glu315, Asn342, and Asp363 each contribute to the S-adenosyl-L-methionine site. Residue Cys389 is the Nucleophile of the active site.

The protein belongs to the class I-like SAM-binding methyltransferase superfamily. RNA M5U methyltransferase family. RlmD subfamily.

The catalysed reaction is uridine(1939) in 23S rRNA + S-adenosyl-L-methionine = 5-methyluridine(1939) in 23S rRNA + S-adenosyl-L-homocysteine + H(+). Catalyzes the formation of 5-methyl-uridine at position 1939 (m5U1939) in 23S rRNA. The sequence is that of 23S rRNA (uracil(1939)-C(5))-methyltransferase RlmD from Klebsiella pneumoniae (strain 342).